A 375-amino-acid chain; its full sequence is N5-carboxyaminoimidazole ribonucleotide synthase (375 aa).

ATP-binding positions include arginine 108, lysine 148, 153–159, 183–186, glutamate 191, histidine 214, and 268–269; these read GYDGKGQ, EQYL, and NE. In terms of domain architecture, ATP-grasp spans 112–298; the sequence is KQTLQDSGSN…QFDTHIKAIT (187 aa).

This sequence belongs to the PurK/PurT family. Homodimer.

It carries out the reaction 5-amino-1-(5-phospho-beta-D-ribosyl)imidazole + hydrogencarbonate + ATP = 5-carboxyamino-1-(5-phospho-D-ribosyl)imidazole + ADP + phosphate + 2 H(+). It functions in the pathway purine metabolism; IMP biosynthesis via de novo pathway; 5-amino-1-(5-phospho-D-ribosyl)imidazole-4-carboxylate from 5-amino-1-(5-phospho-D-ribosyl)imidazole (N5-CAIR route): step 1/2. Functionally, catalyzes the ATP-dependent conversion of 5-aminoimidazole ribonucleotide (AIR) and HCO(3)(-) to N5-carboxyaminoimidazole ribonucleotide (N5-CAIR). This Staphylococcus saprophyticus subsp. saprophyticus (strain ATCC 15305 / DSM 20229 / NCIMB 8711 / NCTC 7292 / S-41) protein is N5-carboxyaminoimidazole ribonucleotide synthase.